Here is a 204-residue protein sequence, read N- to C-terminus: Peptide deformylase (204 aa).

Fe cation is bound by residues Cys-131 and His-174. Glu-175 is an active-site residue. His-178 contributes to the Fe cation binding site.

The protein belongs to the polypeptide deformylase family. It depends on Fe(2+) as a cofactor.

The enzyme catalyses N-terminal N-formyl-L-methionyl-[peptide] + H2O = N-terminal L-methionyl-[peptide] + formate. Functionally, removes the formyl group from the N-terminal Met of newly synthesized proteins. Requires at least a dipeptide for an efficient rate of reaction. N-terminal L-methionine is a prerequisite for activity but the enzyme has broad specificity at other positions. This is Peptide deformylase from Streptococcus thermophilus (strain CNRZ 1066).